The primary structure comprises 997 residues: Bifunctional purine synthesis protein purC/E (997 aa).

Residues 1 to 305 (MTTAINNNIV…NNNNNNNNNS (305 aa)) form an SAICAR synthetase region. 3 stretches are compositionally biased toward low complexity: residues 294-323 (LNNNNNNNNNNSNNNNNNTSSTSRSNSLPN), 342-355 (QQQSGVGNNNNVNS), and 524-536 (TSTSTTTTTTTTS). Disordered regions lie at residues 294–355 (LNNN…NVNS), 518–538 (IPVDNPTSTSTTTTTTTTSNA), 550–569 (INSNTSSHNNNQQQQQQQQT), and 575–604 (PTIINTPTPVRSSVSRSQSPLPSGNGSSII). An AIR carboxylase region spans residues 305–997 (SNNNNNNTSS…GRKMGHVTQQ (693 aa)). Residues 575-597 (PTIINTPTPVRSSVSRSQSPLPS) are compositionally biased toward low complexity. ATP is bound by residues R728, K768, Q779, 807 to 810 (EQYI), and E815. Residues 732–927 (KTFIQSLDIP…QFEQLIRCVC (196 aa)) enclose the ATP-grasp domain. Residues E880 and E898 each contribute to the Mg(2+) site. 897–898 (NE) is an ATP binding site.

It in the N-terminal section; belongs to the SAICAR synthetase family. This sequence in the C-terminal section; belongs to the AIR carboxylase family. Class I subfamily. The cofactor is Mg(2+). Mn(2+) serves as cofactor.

It carries out the reaction 5-amino-1-(5-phospho-D-ribosyl)imidazole-4-carboxylate + L-aspartate + ATP = (2S)-2-[5-amino-1-(5-phospho-beta-D-ribosyl)imidazole-4-carboxamido]succinate + ADP + phosphate + 2 H(+). The enzyme catalyses 5-amino-1-(5-phospho-D-ribosyl)imidazole-4-carboxylate + H(+) = 5-amino-1-(5-phospho-beta-D-ribosyl)imidazole + CO2. Its pathway is purine metabolism; IMP biosynthesis via de novo pathway; 5-amino-1-(5-phospho-D-ribosyl)imidazole-4-carboxylate from 5-amino-1-(5-phospho-D-ribosyl)imidazole (carboxylase route): step 1/1. It participates in purine metabolism; IMP biosynthesis via de novo pathway; 5-amino-1-(5-phospho-D-ribosyl)imidazole-4-carboxamide from 5-amino-1-(5-phospho-D-ribosyl)imidazole-4-carboxylate: step 1/2. Functionally, bifunctional enzyme involved in de novo IMP synthesis, an essential step for de nove purine synthesis. In Dictyostelium discoideum (Social amoeba), this protein is Bifunctional purine synthesis protein purC/E (purC/E).